A 137-amino-acid chain; its full sequence is Actin-depolymerizing factor 12 (137 aa).

At S6 the chain carries Phosphoserine. An ADF-H domain is found at 7-137 (GMAVEDECKL…SLDIIKSRAL (131 aa)).

It belongs to the actin-binding proteins ADF family. As to expression, specifically expressed in pollen.

Its subcellular location is the cytoplasm. The protein resides in the cytoskeleton. Its function is as follows. Actin-depolymerizing protein. Severs actin filaments (F-actin) and binds to actin monomers. The chain is Actin-depolymerizing factor 12 from Arabidopsis thaliana (Mouse-ear cress).